Consider the following 344-residue polypeptide: L-threonine 3-dehydrogenase (344 aa).

Cys-38 contacts Zn(2+). Catalysis depends on charge relay system residues Thr-40 and His-43. Zn(2+) is bound by residues His-63, Glu-64, Cys-93, Cys-96, Cys-99, and Cys-107. Residues Ile-175, Asp-195, Arg-200, 263–265 (LGI), and 287–288 (IY) each bind NAD(+).

This sequence belongs to the zinc-containing alcohol dehydrogenase family. As to quaternary structure, homotetramer. Requires Zn(2+) as cofactor.

The protein resides in the cytoplasm. It carries out the reaction L-threonine + NAD(+) = (2S)-2-amino-3-oxobutanoate + NADH + H(+). It participates in amino-acid degradation; L-threonine degradation via oxydo-reductase pathway; glycine from L-threonine: step 1/2. Its function is as follows. Catalyzes the NAD(+)-dependent oxidation of L-threonine to 2-amino-3-ketobutyrate. The polypeptide is L-threonine 3-dehydrogenase (Deinococcus deserti (strain DSM 17065 / CIP 109153 / LMG 22923 / VCD115)).